The primary structure comprises 453 residues: tRNA modification GTPase MnmE (453 aa).

(6S)-5-formyl-5,6,7,8-tetrahydrofolate-binding residues include R22, E79, and K119. A TrmE-type G domain is found at 215–376 (GMKVVIAGRP…LKQHLKSLMG (162 aa)). N225 provides a ligand contact to K(+). Residues 225 to 230 (NAGKSS), 244 to 250 (TEIAGTT), 269 to 272 (DTAG), and 334 to 337 (NKAD) each bind GTP. S229 lines the Mg(2+) pocket. K(+) contacts are provided by T244, I246, and T249. T250 contributes to the Mg(2+) binding site. K453 is a binding site for (6S)-5-formyl-5,6,7,8-tetrahydrofolate.

The protein belongs to the TRAFAC class TrmE-Era-EngA-EngB-Septin-like GTPase superfamily. TrmE GTPase family. In terms of assembly, homodimer. Heterotetramer of two MnmE and two MnmG subunits. K(+) is required as a cofactor.

It is found in the cytoplasm. Functionally, exhibits a very high intrinsic GTPase hydrolysis rate. Involved in the addition of a carboxymethylaminomethyl (cmnm) group at the wobble position (U34) of certain tRNAs, forming tRNA-cmnm(5)s(2)U34. In Shewanella halifaxensis (strain HAW-EB4), this protein is tRNA modification GTPase MnmE.